Here is a 510-residue protein sequence, read N- to C-terminus: GMP synthase [glutamine-hydrolyzing] (510 aa).

A Glutamine amidotransferase type-1 domain is found at Lys5–Thr195. Residue Cys82 is the Nucleophile of the active site. Catalysis depends on residues His169 and Glu171. One can recognise a GMPS ATP-PPase domain in the interval Trp196–Arg385. Ser223–Ala229 provides a ligand contact to ATP.

As to quaternary structure, homodimer.

It catalyses the reaction XMP + L-glutamine + ATP + H2O = GMP + L-glutamate + AMP + diphosphate + 2 H(+). It functions in the pathway purine metabolism; GMP biosynthesis; GMP from XMP (L-Gln route): step 1/1. Its function is as follows. Catalyzes the synthesis of GMP from XMP. The sequence is that of GMP synthase [glutamine-hydrolyzing] from Halothermothrix orenii (strain H 168 / OCM 544 / DSM 9562).